We begin with the raw amino-acid sequence, 357 residues long: Protein-glutamate methylesterase/protein-glutamine glutaminase (357 aa).

The region spanning 3 to 120 is the Response regulatory domain; sequence RVLVVDDSAF…SLDLYKIKEQ (118 aa). Position 54 is a 4-aspartylphosphate (aspartate 54). In terms of domain architecture, CheB-type methylesterase spans 161–355; it reads PGTGRQIVCI…ASITSCVKKE (195 aa). Residues serine 173, histidine 200, and aspartate 296 contribute to the active site.

The protein belongs to the CheB family. Phosphorylated by CheA. Phosphorylation of the N-terminal regulatory domain activates the methylesterase activity.

Its subcellular location is the cytoplasm. The catalysed reaction is [protein]-L-glutamate 5-O-methyl ester + H2O = L-glutamyl-[protein] + methanol + H(+). It catalyses the reaction L-glutaminyl-[protein] + H2O = L-glutamyl-[protein] + NH4(+). In terms of biological role, involved in the modulation of the chemotaxis system; catalyzes the demethylation of specific methylglutamate residues introduced into the chemoreceptors (methyl-accepting chemotaxis proteins) by CheR. B.subtilis has an effective methylation-independent adaptation system but must utilize the methylation system for adaptation to high concentrations of attractant. This chain is Protein-glutamate methylesterase/protein-glutamine glutaminase, found in Bacillus subtilis (strain 168).